Here is a 287-residue protein sequence, read N- to C-terminus: Large ribosomal subunit protein uL2 (287 aa).

A disordered region spans residues 221–287 (RGSVMNPCDH…SKRSRGGRDS (67 aa)). Positions 258-287 (KTRKRNKPSNRYVLRKRRKTSKRSRGGRDS) are enriched in basic residues.

Belongs to the universal ribosomal protein uL2 family. In terms of assembly, part of the 50S ribosomal subunit. Forms a bridge to the 30S subunit in the 70S ribosome.

Its function is as follows. One of the primary rRNA binding proteins. Required for association of the 30S and 50S subunits to form the 70S ribosome, for tRNA binding and peptide bond formation. It has been suggested to have peptidyltransferase activity; this is somewhat controversial. Makes several contacts with the 16S rRNA in the 70S ribosome. This chain is Large ribosomal subunit protein uL2, found in Parasynechococcus marenigrum (strain WH8102).